Reading from the N-terminus, the 1045-residue chain is Bifunctional glutamine synthetase adenylyltransferase/adenylyl-removing enzyme (1045 aa).

The segment at 1–527 (MSGPLRSERK…LHSQLFYRPL (527 aa)) is adenylyl removase. The tract at residues 533–1045 (NLSADAIRLS…GVDSMEQREF (513 aa)) is adenylyl transferase.

The protein belongs to the GlnE family. Requires Mg(2+) as cofactor.

It carries out the reaction [glutamine synthetase]-O(4)-(5'-adenylyl)-L-tyrosine + phosphate = [glutamine synthetase]-L-tyrosine + ADP. The enzyme catalyses [glutamine synthetase]-L-tyrosine + ATP = [glutamine synthetase]-O(4)-(5'-adenylyl)-L-tyrosine + diphosphate. Functionally, involved in the regulation of glutamine synthetase GlnA, a key enzyme in the process to assimilate ammonia. When cellular nitrogen levels are high, the C-terminal adenylyl transferase (AT) inactivates GlnA by covalent transfer of an adenylyl group from ATP to specific tyrosine residue of GlnA, thus reducing its activity. Conversely, when nitrogen levels are low, the N-terminal adenylyl removase (AR) activates GlnA by removing the adenylyl group by phosphorolysis, increasing its activity. The regulatory region of GlnE binds the signal transduction protein PII (GlnB) which indicates the nitrogen status of the cell. In Corynebacterium glutamicum (strain ATCC 13032 / DSM 20300 / JCM 1318 / BCRC 11384 / CCUG 27702 / LMG 3730 / NBRC 12168 / NCIMB 10025 / NRRL B-2784 / 534), this protein is Bifunctional glutamine synthetase adenylyltransferase/adenylyl-removing enzyme.